The following is a 108-amino-acid chain: UPF0060 membrane protein RHOS4_03690 (108 aa).

4 helical membrane passes run 5-25 (LAAYAGAALAEIAGCFAVWAW), 32-52 (ALWLVPGALSLGTFAWLLALT), 62-82 (AVYGGVYVAASLLWLWAVEGV), and 86-106 (RWDMGGAALVLAGAAVILWAP).

The protein belongs to the UPF0060 family.

Its subcellular location is the cell inner membrane. The chain is UPF0060 membrane protein RHOS4_03690 from Cereibacter sphaeroides (strain ATCC 17023 / DSM 158 / JCM 6121 / CCUG 31486 / LMG 2827 / NBRC 12203 / NCIMB 8253 / ATH 2.4.1.) (Rhodobacter sphaeroides).